The following is a 312-amino-acid chain: Ribosomal RNA small subunit methyltransferase H (312 aa).

S-adenosyl-L-methionine is bound by residues 38 to 40 (GGH), D58, F84, D104, and Q111.

Belongs to the methyltransferase superfamily. RsmH family.

Its subcellular location is the cytoplasm. It carries out the reaction cytidine(1402) in 16S rRNA + S-adenosyl-L-methionine = N(4)-methylcytidine(1402) in 16S rRNA + S-adenosyl-L-homocysteine + H(+). Functionally, specifically methylates the N4 position of cytidine in position 1402 (C1402) of 16S rRNA. In Alcanivorax borkumensis (strain ATCC 700651 / DSM 11573 / NCIMB 13689 / SK2), this protein is Ribosomal RNA small subunit methyltransferase H.